A 201-amino-acid polypeptide reads, in one-letter code: MSSKLRVGVAGPVGSGKTALVETLCIALKKRYKIAVVTNDIYTKEDANFLIKKKILEEGRIVGVETGGCPHTAIREDCSLNKNAVMDLENKYDPLDFIFVESGGDNLAASFSPELVDLSIYVIDVSAGDKIPRKGGPGITRSDLLLINKIDLADMVGANLNIMQNDTNMMRDGKPWFFTNLSSGSGVDNVIKYLVAQIPNI.

11–18 (GPVGSGKT) lines the GTP pocket.

It belongs to the SIMIBI class G3E GTPase family. UreG subfamily. As to quaternary structure, homodimer. UreD, UreF and UreG form a complex that acts as a GTP-hydrolysis-dependent molecular chaperone, activating the urease apoprotein by helping to assemble the nickel containing metallocenter of UreC. The UreE protein probably delivers the nickel.

It is found in the cytoplasm. Functionally, facilitates the functional incorporation of the urease nickel metallocenter. This process requires GTP hydrolysis, probably effectuated by UreG. In Prochlorococcus marinus subsp. pastoris (strain CCMP1986 / NIES-2087 / MED4), this protein is Urease accessory protein UreG.